The sequence spans 622 residues: Chaperone protein HscA homolog (622 aa).

The protein belongs to the heat shock protein 70 family.

Its function is as follows. Chaperone involved in the maturation of iron-sulfur cluster-containing proteins. Has a low intrinsic ATPase activity which is markedly stimulated by HscB. The sequence is that of Chaperone protein HscA homolog from Burkholderia ambifaria (strain MC40-6).